The chain runs to 300 residues: Serine/arginine-rich splicing factor SR34A (300 aa).

An RRM 1 domain is found at R7–G82. Disordered regions lie at residues H81–G110 and Y198–V300. The span at G94–G110 shows a compositional bias: gly residues. Positions F122–S200 constitute an RRM 2 domain. Over residues S203–S239 the composition is skewed to basic residues. Phosphoserine is present on residues S207, S209, S231, S233, S239, S259, S275, and S285. A compositionally biased stretch (low complexity) spans S253–P262. The segment covering S275 to S287 has biased composition (basic residues).

Belongs to the splicing factor SR family. SR subfamily. Component of the spliceosome.

The protein resides in the nucleus speckle. Its subcellular location is the nucleus. It is found in the nucleoplasm. Functionally, probably involved in intron recognition and spliceosome assembly. In Arabidopsis thaliana (Mouse-ear cress), this protein is Serine/arginine-rich splicing factor SR34A (SR34A).